The sequence spans 490 residues: Cardiolipin synthase 1 (490 aa).

Transmembrane regions (helical) follow at residues 9–29 and 42–62; these read ILTILLVVGFITNVVLAFVII and WAWLFVLFVLPVIGFILYLFL. PLD phosphodiesterase domains follow at residues 225 to 252 and 403 to 430; these read MNNRNHRKIIIIDGQIGYIGGFNVGDDY and QNGFIHSKILMIDDEISSIGSANMDFRS. Active-site residues include His-230, Lys-232, Asp-237, His-408, Lys-410, and Asp-415.

This sequence belongs to the phospholipase D family. Cardiolipin synthase subfamily.

Its subcellular location is the cell membrane. It catalyses the reaction 2 a 1,2-diacyl-sn-glycero-3-phospho-(1'-sn-glycerol) = a cardiolipin + glycerol. Its function is as follows. Catalyzes the reversible phosphatidyl group transfer from one phosphatidylglycerol molecule to another to form cardiolipin (CL) (diphosphatidylglycerol) and glycerol. The polypeptide is Cardiolipin synthase 1 (cls1) (Staphylococcus epidermidis (strain ATCC 35984 / DSM 28319 / BCRC 17069 / CCUG 31568 / BM 3577 / RP62A)).